We begin with the raw amino-acid sequence, 322 residues long: Putative HTH-type transcriptional regulatory protein rrnAC2519 (322 aa).

Positions 132–189 constitute an HTH cro/C1-type domain; sequence LADVREDRDWSLGRLAKELGVSRRTVSKYEDGMDASVEVAAELEDLFDAPLTSPVSVL. A DNA-binding region (H-T-H motif) is located at residues 143-162; sequence LGRLAKELGVSRRTVSKYED.

This Haloarcula marismortui (strain ATCC 43049 / DSM 3752 / JCM 8966 / VKM B-1809) (Halobacterium marismortui) protein is Putative HTH-type transcriptional regulatory protein rrnAC2519.